Consider the following 551-residue polypeptide: MSLKNWLLLRDIQYEGTFYKKFPHVYNIYVIGFIACISGLMFGFDIASMSSMIGTDVYKDYFSNPDSLTYGGITASMAGGSFLGSLISPNFSDAFGRKVSLHICAALWIIGAILQCAAQDQAMLIVGRVISGMGIGFGSSAAPVYCSEISPPKIRGTISGLFQFSVTVGIMVLFYIGYGCHFIDGAAAFRITWGLQMVPGLILMVGVFFIPESPRWLANHDRWEETSLIVANIVANGDVNNEQVRFQLEEIKEQVIIDSAAKNFGYKDLFRKKTLPKTIVGVSAQMWQQLCGMNVMMYYIVYIFNMAGYTGNTNLVASSIQYVLNVVMTIPALFLIDKFGRRPVLIIGGIFMFTWLFSVAGILATYSVPAPGGVNGDDTVTIQIPSENTSAANGVIASSYLFVCFFAPTWGIGIWIYCSEIFNNMERAKGSALSAATNWAFNFALAMFVPSAFKNISWKTYIIFGVFSVALTIQTFFMFPETKGKTLEEIDQMWVDNIPAWRTANYIPQLPIVKDEEGNKLGLLGNPQHLEDVHSNEKGLLDRSDSASNSN.

Residues 1–27 (MSLKNWLLLRDIQYEGTFYKKFPHVYN) lie on the Cytoplasmic side of the membrane. A helical membrane pass occupies residues 28 to 48 (IYVIGFIACISGLMFGFDIAS). The Extracellular portion of the chain corresponds to 49–70 (MSSMIGTDVYKDYFSNPDSLTY). Residues 71–91 (GGITASMAGGSFLGSLISPNF) traverse the membrane as a helical segment. Residues 92 to 98 (SDAFGRK) are Cytoplasmic-facing. A helical membrane pass occupies residues 99–119 (VSLHICAALWIIGAILQCAAQ). Over 120–123 (DQAM) the chain is Extracellular. The chain crosses the membrane as a helical span at residues 124 to 144 (LIVGRVISGMGIGFGSSAAPV). The Cytoplasmic segment spans residues 145-155 (YCSEISPPKIR). A helical membrane pass occupies residues 156-176 (GTISGLFQFSVTVGIMVLFYI). Over 177 to 190 (GYGCHFIDGAAAFR) the chain is Extracellular. Residues 191-211 (ITWGLQMVPGLILMVGVFFIP) traverse the membrane as a helical segment. Residues 212–289 (ESPRWLANHD…VGVSAQMWQQ (78 aa)) lie on the Cytoplasmic side of the membrane. The helical transmembrane segment at 290–310 (LCGMNVMMYYIVYIFNMAGYT) threads the bilayer. The Extracellular segment spans residues 311-315 (GNTNL). The helical transmembrane segment at 316 to 336 (VASSIQYVLNVVMTIPALFLI) threads the bilayer. The Cytoplasmic portion of the chain corresponds to 337-343 (DKFGRRP). Residues 344–364 (VLIIGGIFMFTWLFSVAGILA) traverse the membrane as a helical segment. Topologically, residues 365–395 (TYSVPAPGGVNGDDTVTIQIPSENTSAANGV) are extracellular. Residue Asn-388 is glycosylated (N-linked (GlcNAc...) asparagine). Residues 396–416 (IASSYLFVCFFAPTWGIGIWI) form a helical membrane-spanning segment. Residues 417-432 (YCSEIFNNMERAKGSA) are Cytoplasmic-facing. The chain crosses the membrane as a helical span at residues 433–453 (LSAATNWAFNFALAMFVPSAF). Residues 454–459 (KNISWK) lie on the Extracellular side of the membrane. A helical membrane pass occupies residues 460–480 (TYIIFGVFSVALTIQTFFMFP). Residues 481 to 551 (ETKGKTLEEI…DRSDSASNSN (71 aa)) lie on the Cytoplasmic side of the membrane.

This sequence belongs to the major facilitator superfamily. Sugar transporter (TC 2.A.1.1) family.

The protein localises to the membrane. In terms of biological role, high-affinity glucose transporter. The chain is High-affinity glucose transporter (HGT1) from Kluyveromyces lactis (strain ATCC 8585 / CBS 2359 / DSM 70799 / NBRC 1267 / NRRL Y-1140 / WM37) (Yeast).